The sequence spans 422 residues: Interleukin-11 receptor subunit alpha (422 aa).

Residues 1–22 (MSSSCSGLSRVLVAVATALVSA) form the signal peptide. Topologically, residues 24-370 (SPCPQAWGPP…DSVEQVAVLA (347 aa)) are extracellular. An Ig-like C2-type domain is found at 27–110 (PQAWGPPGVQ…LGGTVTLQLG (84 aa)). Disulfide bonds link cysteine 48/cysteine 94, cysteine 120/cysteine 130, and cysteine 170/cysteine 180. 2 consecutive Fibronectin type-III domains span residues 112-219 (PPAR…LRPD) and 220-317 (PPQG…TPST). Asparagine 127 carries N-linked (GlcNAc...) asparagine glycosylation. Asparagine 194 is a glycosylation site (N-linked (GlcNAc...) asparagine). The WSXWS motif motif lies at 304–308 (WSTWS). A disordered region spans residues 335-355 (EVEPQVDSPAPPRPSLQPHPR). The helical transmembrane segment at 371-391 (SLGILSFLGLVAGALALGLWL) threads the bilayer. At 392–422 (RLRRGGKDGSPKPGFLASVIPVDRRPGAPNL) the chain is on the cytoplasmic side. The disordered stretch occupies residues 398 to 422 (KDGSPKPGFLASVIPVDRRPGAPNL). The segment covering 413 to 422 (VDRRPGAPNL) has biased composition (basic and acidic residues).

The protein belongs to the type I cytokine receptor family. Type 3 subfamily. As to quaternary structure, on IL11 binding, forms a multimer complex with IL6ST/gp130. Post-translationally, a short soluble form is also released from the membrane by proteolysis. The sIL11RA is formed either by limited proteolysis of membrane-bound receptors, a process referred to as ectodomain shedding, or directly secreted from the cells after alternative mRNA splicing. mIL11RA is cleaved by the proteases ADAM10, ELANE and PRTN3. As to expression, expressed in a number of cell lines, including the myelogenous leukemia cell line K-562, the megakaryocytic leukemia cell line M-07e, the erythroleukemia cell line TF-1, and the osteosarcoma cell lines, MG-63 and SaOS-2. Also expressed in normal and malignant prostate epithelial cell lines. Expression levels are increased in prostate carcinoma.

Its subcellular location is the membrane. It is found in the secreted. In terms of biological role, receptor for interleukin-11 (IL11). The receptor systems for IL6, LIF, OSM, CNTF, IL11 and CT1 can utilize IL6ST for initiating signal transmission. The IL11/IL11RA/IL6ST complex may be involved in the control of proliferation and/or differentiation of skeletogenic progenitor or other mesenchymal cells. Essential for the normal development of craniofacial bones and teeth. Restricts suture fusion and tooth number. Functionally, soluble form of IL11 receptor (sIL11RA) that acts as an agonist of IL11 activity. The IL11:sIL11RA complex binds to IL6ST/gp130 on cell surfaces and induces signaling also on cells that do not express membrane-bound IL11RA in a process called IL11 trans-signaling. This Homo sapiens (Human) protein is Interleukin-11 receptor subunit alpha.